The following is a 99-amino-acid chain: Complement inhibitor RaCI7 (99 aa).

The N-terminal stretch at Met-1 to Ser-24 is a signal peptide. 3 cysteine pairs are disulfide-bonded: Cys-37–Cys-61, Cys-42–Cys-63, and Cys-57–Cys-78.

It belongs to the RaCI family. In terms of tissue distribution, expressed in salivary glands.

Its subcellular location is the secreted. Complement inhibitor. Prevents complement-mediated C5 activation by binding to C5. Binds C5 at a different binding site than the other tick complement inhibitors OmCI and CirpT1, and the drug eculizumab. The protein is Complement inhibitor RaCI7 of Dermacentor andersoni (Rocky mountain wood tick).